The primary structure comprises 1829 residues: Iron-regulated protein FrpC (1829 aa).

22 Hemolysin-type calcium-binding repeats span residues 869–886 (FGHN…NDTL), 887–904 (IGGA…SDTY), 1015–1032 (NGGL…DDLL), 1033–1050 (NGDA…NDTL), 1051–1068 (NGGE…NDAL), 1069–1086 (NGGE…NDTL), 1087–1104 (IGGA…SDTY), 1215–1232 (NGGL…DDLL), 1233–1250 (NGDA…NDTL), 1251–1268 (DGGE…NDAL), 1269–1286 (NGGE…NDTL), 1287–1304 (IGGA…SDTY), 1415–1432 (NGGL…DDLL), 1433–1450 (NGDA…NDTL), 1451–1468 (DGGE…NDAL), 1469–1486 (NGGE…NDTL), 1487–1504 (IGGA…SDTY), 1615–1632 (NGGL…DDLL), 1633–1650 (NGDA…NDTL), 1651–1668 (NGGE…NDVL), 1669–1686 (NGGE…NDTL), and 1687–1704 (IGGA…SDTY).

It belongs to the RTX prokaryotic toxin (TC 1.C.11) family.

It is found in the cell outer membrane. The protein resides in the secreted. In terms of biological role, may participate in the pathogenesis of meningococcal disease. This Neisseria meningitidis serogroup C protein is Iron-regulated protein FrpC (frpC).